Here is a 145-residue protein sequence, read N- to C-terminus: Bacilliredoxin SAR1441 (145 aa).

This sequence belongs to the bacilliredoxin family.

This Staphylococcus aureus (strain MRSA252) protein is Bacilliredoxin SAR1441.